We begin with the raw amino-acid sequence, 391 residues long: MSDLKSRLIKASTSKLTAELTASKFFNEKDVVRTKIPMMNIALSGEITGGMQSGLLILAGPSKSFKSNFGLTMVSSYMRQYPDAVCLFYDSEFGITPAYLRSMGVDPERVIHTPVQSLEQLRIDMVNQLDAIERGEKVVVFIDSLGNLASKKETEDALNEKVVSDMTRAKTMKSLFRIVTPYFSTKNIPCIAINHTYETQEMFSKTVMGGGTGPMYSADTVFIIGKRQIKDGSDLQGYQFVLNVEKSRTVKEKSKFFIDVKFDGGIDPYSGLLDMALELGFVVKPKNGWYAREFLDEETGEMIREEKSWRAKDTNCTTFWGPLFKHQPFRDAIKRAYQLGAIDSNEIVEAEVDELINSKVEKFKSPESKSKSAADLETDLEQLSDMEEFNE.

60–67 (GPSKSFKS) provides a ligand contact to ATP. Basic and acidic residues predominate over residues 364 to 374 (KSPESKSKSAA). Positions 364–391 (KSPESKSKSAADLETDLEQLSDMEEFNE) are disordered. The segment covering 376–391 (LETDLEQLSDMEEFNE) has biased composition (acidic residues).

The protein belongs to the RecA family.

In terms of biological role, important in genetic recombination, DNA repair, and replication. Possesses pairing and strand-transfer activity. Interacts with dda and gene 32 proteins. The sequence is that of Recombination and repair protein (UVSX) from Enterobacteria phage T4 (Bacteriophage T4).